A 777-amino-acid chain; its full sequence is Aminopeptidase P (777 aa).

The first 17 residues, 1–17 (MQLNFLLFVFIFLMVFH), serve as a signal peptide directing secretion. His551 contributes to the substrate binding site. Positions 570 and 581 each coordinate Mn(2+). Residue His640 coordinates substrate. His644 serves as a coordination point for Mn(2+). Residue His653 participates in substrate binding. Glu676 and Glu690 together coordinate Mn(2+).

Belongs to the peptidase M24B family. As to quaternary structure, homodimer. Mn(2+) serves as cofactor. The N-terminus may be proteolytically cleaved to generate a 73-kDa mature form.

The protein localises to the vacuole lumen. The protein resides in the cytoplasm. It catalyses the reaction Release of any N-terminal amino acid, including proline, that is linked to proline, even from a dipeptide or tripeptide.. With respect to regulation, partially activated by Co(2+) and Mg(2+) has no effect. Inhibited by 1 mM Zn(2+), Ni(2+), or Cu(2+). Inhibited by apstatin, a non-hydrolysable peptide analog. In terms of biological role, catalyzes the removal of a penultimate prolyl residue from the N-termini of peptides. In the food vacuole, involved in the final step of host hemoglobin catabolism, by cleaving hemoglobin-derived oligopeptides. In the cytoplasm, may be involved in the last steps of the turnover of ubiquitinated proteins. In Plasmodium falciparum (isolate 3D7), this protein is Aminopeptidase P.